The sequence spans 312 residues: Malate dehydrogenase (312 aa).

NAD(+)-binding positions include 12–17 (GAGFTG) and aspartate 36. Substrate is bound by residues arginine 87 and arginine 93. NAD(+) contacts are provided by residues asparagine 100 and 123 to 125 (LTN). Asparagine 125 lines the substrate pocket. Serine 149 is subject to Phosphoserine. Arginine 156 is a substrate binding site. Residue histidine 180 is the Proton acceptor of the active site.

It belongs to the LDH/MDH superfamily. MDH type 3 family.

The enzyme catalyses (S)-malate + NAD(+) = oxaloacetate + NADH + H(+). In terms of biological role, catalyzes the reversible oxidation of malate to oxaloacetate. In Geobacillus sp. (strain WCH70), this protein is Malate dehydrogenase.